Consider the following 117-residue polypeptide: Large ribosomal subunit protein uL18 (117 aa).

It belongs to the universal ribosomal protein uL18 family. As to quaternary structure, part of the 50S ribosomal subunit; part of the 5S rRNA/L5/L18/L25 subcomplex. Contacts the 5S and 23S rRNAs.

In terms of biological role, this is one of the proteins that bind and probably mediate the attachment of the 5S RNA into the large ribosomal subunit, where it forms part of the central protuberance. The protein is Large ribosomal subunit protein uL18 of Leuconostoc citreum (strain KM20).